We begin with the raw amino-acid sequence, 81 residues long: Centromere protein X (81 aa).

N-acetylmethionine is present on Met-1.

The protein belongs to the CENP-X/MHF2 family. In terms of assembly, heterodimer with CENPX, sometimes called MHF; this interaction stabilizes both partners. MHF heterodimers can assemble to form tetrameric structures. MHF also coassemble with CENPT-CENPW heterodimers at centromeres to form the tetrameric CENP-T-W-S-X complex. Forms a discrete complex with FANCM and CENPX, called FANCM-MHF; this interaction, probably mediated by direct binding between CENPS and FANCM, leads to synergistic activation of double-stranded DNA binding and strongly stimulates FANCM-mediated DNA remodeling. Recruited by FANCM to the Fanconi anemia (FA) core complex, which consists of CENPS, CENPX, FANCA, FANCB, FANCC, FANCE, FANCF, FANCG, FANCL, FANCM, FAAP24 and FAAP100. The FA core complex associates with Bloom syndrome (BLM) complex, which consists of at least BLM, DNA topoisomerase 3-alpha (TOP3A), RMI1/BLAP75, RPA1/RPA70 and RPA2/RPA32. The super complex between FA and BLM is called BRAFT.

The protein resides in the nucleus. It is found in the chromosome. Its subcellular location is the centromere. The protein localises to the kinetochore. Its function is as follows. DNA-binding component of the Fanconi anemia (FA) core complex. Required for the normal activation of the FA pathway, leading to monoubiquitination of the FANCI-FANCD2 complex in response to DNA damage, cellular resistance to DNA cross-linking drugs, and prevention of chromosomal breakage. In complex with CENPS (MHF heterodimer), crucial cofactor for FANCM in both binding and ATP-dependent remodeling of DNA. Stabilizes FANCM. In complex with CENPS and FANCM (but not other FANC proteins), rapidly recruited to blocked forks and promotes gene conversion at blocked replication forks. In complex with CENPS, CENPT and CENPW (CENP-T-W-S-X heterotetramer), involved in the formation of a functional kinetochore outer plate, which is essential for kinetochore-microtubule attachment and faithful mitotic progression. As a component of MHF and CENP-T-W-S-X complexes, binds DNA and bends it to form a nucleosome-like structure. DNA-binding function is fulfilled in the presence of CENPS, with the following preference for DNA substates: Holliday junction &gt; double-stranded &gt; splay arm &gt; single-stranded. Does not bind DNA on its own. This chain is Centromere protein X (CENPX), found in Homo sapiens (Human).